The primary structure comprises 515 residues: Vacuolar fusion protein CCZ1 homolog A (515 aa).

The protein belongs to the CCZ1 family. Interacts with MON1.

It localises to the endosome. The protein resides in the prevacuolar compartment. In terms of biological role, plays an important role in membrane trafficking through the secretory apparatus. In complex with MON1, acts as a guanine exchange factor (GEF) for RABG3F of the Rab7 protein family. Promotes the exchange of GDP to GTP, converting RABG3F from an inactive GDP-bound form into an active GTP-bound form. The RABG3F active form is involved in protein trafficking from prevacuolar compartments (PVCs) to vacuoles. May serve as a linker between Rab5 and Rab7 protein families in PVCs and mediate PVC maturation. This Arabidopsis thaliana (Mouse-ear cress) protein is Vacuolar fusion protein CCZ1 homolog A.